The following is a 548-amino-acid chain: Aspergilol synthase AuAP450 (548 aa).

A helical membrane pass occupies residues 38–58 (PQLVITTLGALLLAAFYLLPS). Heme is bound at residue Cys489.

It belongs to the cytochrome P450 family. Heme serves as cofactor.

It localises to the membrane. It participates in secondary metabolite biosynthesis; terpenoid biosynthesis. In terms of biological role, cytochrome P450 monooxygenase; part of the gene cluster that mediates the biosynthesis of aspergiltriene A, aspergildienes A-D and aspergilols A-D. The bifunctional terpene synthase AuAS converts DMAPP and IPP into sesterterpenes. The C-terminal prenyltransferase (PT) domain of AuAS catalyzes formation of GFPP, whereas the N-terminal terpene cyclase (TC) domain catalyzes the cyclization of GFPP into 5 distinct sesterterpenes: aspergiltriene A, aspergildiene A, aspergildiene B, aspergildiene C and aspergildiene D. The cytochrome P450 monooxygenase AP450 then hydroxylates the aspergildienes A, B, C and D to yield the corresponding sesterterpene alcohols, aspergilols A-D. This is Aspergilol synthase AuAP450 from Aspergillus ustus.